The following is a 30-amino-acid chain: GLPTCGETCFGGTCNTPGCSCSSWPICTRD.

Positions 1 to 30 (GLPTCGETCFGGTCNTPGCSCSSWPICTRD) form a cross-link, cyclopeptide (Gly-Asp). 3 cysteine pairs are disulfide-bonded: Cys-5–Cys-19, Cys-9–Cys-21, and Cys-14–Cys-27.

The protein belongs to the cyclotide family. Moebius subfamily. In terms of processing, this peptide occurs in both cyclic and linear forms. The linear form contains unmodified Trp-24, the cyclic peptide occurs in two forms with unmodified Trp-24, and with Trp-24 oxidized to form oxindolylalanine. Oxidation is enhanced by exposure to sunlight.

Functionally, probably participates in a plant defense mechanism. This Oldenlandia affinis protein is Kalata-B10.